The following is a 162-amino-acid chain: Transcription elongation factor GreA (162 aa).

The stretch at 48–76 forms a coiled coil; sequence NSEYQSAKDEQAFVEGRVKQLQQMIQFAQ. Positions 111-132 are disordered; sequence GSAESDPLSGKISNDSPMGKAL.

This sequence belongs to the GreA/GreB family.

Necessary for efficient RNA polymerase transcription elongation past template-encoded arresting sites. The arresting sites in DNA have the property of trapping a certain fraction of elongating RNA polymerases that pass through, resulting in locked ternary complexes. Cleavage of the nascent transcript by cleavage factors such as GreA or GreB allows the resumption of elongation from the new 3'terminus. GreA releases sequences of 2 to 3 nucleotides. The polypeptide is Transcription elongation factor GreA (Oenococcus oeni (strain ATCC BAA-331 / PSU-1)).